Reading from the N-terminus, the 252-residue chain is tRNA (guanine-N(1)-)-methyltransferase (252 aa).

S-adenosyl-L-methionine contacts are provided by residues Gly-116 and 135–140 (LGDYVL).

This sequence belongs to the RNA methyltransferase TrmD family. Homodimer.

It localises to the cytoplasm. It catalyses the reaction guanosine(37) in tRNA + S-adenosyl-L-methionine = N(1)-methylguanosine(37) in tRNA + S-adenosyl-L-homocysteine + H(+). Functionally, specifically methylates guanosine-37 in various tRNAs. This is tRNA (guanine-N(1)-)-methyltransferase from Limosilactobacillus fermentum (strain NBRC 3956 / LMG 18251) (Lactobacillus fermentum).